We begin with the raw amino-acid sequence, 477 residues long: Histidine--tRNA ligase (477 aa).

The protein belongs to the class-II aminoacyl-tRNA synthetase family. Homodimer.

Its subcellular location is the cytoplasm. The enzyme catalyses tRNA(His) + L-histidine + ATP = L-histidyl-tRNA(His) + AMP + diphosphate + H(+). This chain is Histidine--tRNA ligase, found in Xanthomonas campestris pv. campestris (strain 8004).